Reading from the N-terminus, the 393-residue chain is Putative outer capsid protein VP9 (393 aa).

It localises to the virion. This Micromonas pusilla reovirus (isolate Netherlands/2005) (MpRV) protein is Putative outer capsid protein VP9 (S9).